The following is a 307-amino-acid chain: Ornithine carbamoyltransferase (307 aa).

Carbamoyl phosphate-binding positions include 51-54 (STRT), glutamine 78, arginine 102, and 129-132 (HPCQ). Residues asparagine 160, aspartate 220, and 224-225 (SM) each bind L-ornithine. Carbamoyl phosphate is bound by residues 260–261 (CL) and arginine 288.

This sequence belongs to the aspartate/ornithine carbamoyltransferase superfamily. OTCase family.

The protein localises to the cytoplasm. The catalysed reaction is carbamoyl phosphate + L-ornithine = L-citrulline + phosphate + H(+). Its pathway is amino-acid biosynthesis; L-arginine biosynthesis; L-arginine from L-ornithine and carbamoyl phosphate: step 1/3. In terms of biological role, reversibly catalyzes the transfer of the carbamoyl group from carbamoyl phosphate (CP) to the N(epsilon) atom of ornithine (ORN) to produce L-citrulline. The chain is Ornithine carbamoyltransferase (argF) from Archaeoglobus fulgidus (strain ATCC 49558 / DSM 4304 / JCM 9628 / NBRC 100126 / VC-16).